Reading from the N-terminus, the 228-residue chain is L-ribulose-5-phosphate 4-epimerase UlaF (228 aa).

Substrate-binding positions include 26-27 (GN), 43-44 (SG), and 72-73 (SS). Zn(2+) contacts are provided by Asp-74, His-93, and His-95. The active-site Proton donor/acceptor is the Asp-118. A Zn(2+)-binding site is contributed by His-167. Tyr-225 functions as the Proton donor/acceptor in the catalytic mechanism.

This sequence belongs to the aldolase class II family. AraD/FucA subfamily. Zn(2+) serves as cofactor.

It catalyses the reaction L-ribulose 5-phosphate = D-xylulose 5-phosphate. The protein operates within cofactor degradation; L-ascorbate degradation; D-xylulose 5-phosphate from L-ascorbate: step 4/4. Functionally, catalyzes the isomerization of L-ribulose 5-phosphate to D-xylulose 5-phosphate. Is involved in the anaerobic L-ascorbate utilization. This Escherichia coli O17:K52:H18 (strain UMN026 / ExPEC) protein is L-ribulose-5-phosphate 4-epimerase UlaF.